Reading from the N-terminus, the 62-residue chain is DNA-directed RNA polymerase subunit Rpo10 (62 aa).

The Zn(2+) site is built by Cys6, Cys9, Cys43, and Cys44.

The protein belongs to the archaeal Rpo10/eukaryotic RPB10 RNA polymerase subunit family. In terms of assembly, part of the RNA polymerase complex. Requires Zn(2+) as cofactor.

The protein resides in the cytoplasm. It catalyses the reaction RNA(n) + a ribonucleoside 5'-triphosphate = RNA(n+1) + diphosphate. In terms of biological role, DNA-dependent RNA polymerase (RNAP) catalyzes the transcription of DNA into RNA using the four ribonucleoside triphosphates as substrates. This Methanosphaerula palustris (strain ATCC BAA-1556 / DSM 19958 / E1-9c) protein is DNA-directed RNA polymerase subunit Rpo10.